A 110-amino-acid chain; its full sequence is UPF0122 protein BPUM_1495 (110 aa).

It belongs to the UPF0122 family.

In terms of biological role, might take part in the signal recognition particle (SRP) pathway. This is inferred from the conservation of its genetic proximity to ftsY/ffh. May be a regulatory protein. This is UPF0122 protein BPUM_1495 from Bacillus pumilus (strain SAFR-032).